A 296-amino-acid chain; its full sequence is Probable deoxyuridine 5'-triphosphate nucleotidohydrolase (296 aa).

The stretch at 66–102 (EIDKNIVKNLEDKVNCLEQDVQYLKNELKKKDADWQQ) forms a coiled coil.

Belongs to the dUTPase family.

It catalyses the reaction dUTP + H2O = dUMP + diphosphate + H(+). It participates in pyrimidine metabolism; dUMP biosynthesis; dUMP from dCTP (dUTP route): step 2/2. Its function is as follows. This enzyme is involved in nucleotide metabolism: it produces dUMP, the immediate precursor of thymidine nucleotides and it decreases the intracellular concentration of dUTP so that uracil cannot be incorporated into DNA. In Acheta domesticus (House cricket), this protein is Probable deoxyuridine 5'-triphosphate nucleotidohydrolase.